Consider the following 111-residue polypeptide: Nucleoid-associated protein NGK_1136 (111 aa).

It belongs to the YbaB/EbfC family. In terms of assembly, homodimer.

The protein localises to the cytoplasm. It localises to the nucleoid. Its function is as follows. Binds to DNA and alters its conformation. May be involved in regulation of gene expression, nucleoid organization and DNA protection. The sequence is that of Nucleoid-associated protein NGK_1136 from Neisseria gonorrhoeae (strain NCCP11945).